We begin with the raw amino-acid sequence, 280 residues long: Phosphonoacetaldehyde hydrolase (280 aa).

Asp-20 (nucleophile) is an active-site residue. Residues Asp-20 and Ala-22 each contribute to the Mg(2+) site. Lys-61 serves as the catalytic Schiff-base intermediate with substrate. Asp-194 lines the Mg(2+) pocket.

The protein belongs to the HAD-like hydrolase superfamily. PhnX family. In terms of assembly, homodimer. Requires Mg(2+) as cofactor.

The catalysed reaction is phosphonoacetaldehyde + H2O = acetaldehyde + phosphate + H(+). Functionally, involved in phosphonate degradation. In Nitratidesulfovibrio vulgaris (strain DSM 19637 / Miyazaki F) (Desulfovibrio vulgaris), this protein is Phosphonoacetaldehyde hydrolase.